The primary structure comprises 896 residues: DNA mismatch repair protein MutS (896 aa).

618–625 (GPNMSGKS) contacts ATP. A compositionally biased stretch (basic and acidic residues) spans 805–825 (GKESTKTGKGENKNISHKTES). Residues 805-826 (GKESTKTGKGENKNISHKTESD) are disordered.

This sequence belongs to the DNA mismatch repair MutS family.

In terms of biological role, this protein is involved in the repair of mismatches in DNA. It is possible that it carries out the mismatch recognition step. This protein has a weak ATPase activity. In Halothermothrix orenii (strain H 168 / OCM 544 / DSM 9562), this protein is DNA mismatch repair protein MutS.